We begin with the raw amino-acid sequence, 600 residues long: ATP-dependent lipid A-core flippase (600 aa).

5 consecutive transmembrane segments (helical) span residues 28 to 48 (IMAV…IAFI), 80 to 100 (IMLM…VANF), 182 to 202 (WKLS…ISVV), 267 to 287 (ISQP…LYAA), and 295 to 315 (DLTA…LQPI). An ABC transmembrane type-1 domain is found at 28-327 (IMAVLGLITY…LTRVNAEFQR (300 aa)). One can recognise an ABC transporter domain in the interval 359-596 (LAFDNVTFAY…AGIYANLYQM (238 aa)). 393 to 400 (GRSGSGKS) is a binding site for ATP.

It belongs to the ABC transporter superfamily. Lipid exporter (TC 3.A.1.106) family. In terms of assembly, homodimer.

The protein resides in the cell inner membrane. It catalyses the reaction ATP + H2O + lipid A-core oligosaccharideSide 1 = ADP + phosphate + lipid A-core oligosaccharideSide 2.. Its function is as follows. Involved in lipopolysaccharide (LPS) biosynthesis. Translocates lipid A-core from the inner to the outer leaflet of the inner membrane. Transmembrane domains (TMD) form a pore in the inner membrane and the ATP-binding domain (NBD) is responsible for energy generation. The protein is ATP-dependent lipid A-core flippase of Shewanella frigidimarina (strain NCIMB 400).